A 128-amino-acid chain; its full sequence is Type III secretion protein HrcQb (128 aa).

The span at 1–21 (MSTEDLYQEDVEMLDDYEDPS) shows a compositional bias: acidic residues. The segment at 1–57 (MSTEDLYQEDVEMLDDYEDPSTEQHWSEEDGEPSGYATAEPDDHAAQEEQDEPPALD) is disordered. Residues 50–128 (QDEPPALDSL…LQITRLVTRS (79 aa)) form a hrcQb-C region. Positions 78–81 (RRLD) are dimer-dimer interface.

This sequence belongs to the FliN/MopA/SpaO family. Homotetramer. The four monomers assemble into two tightly bound homodimers. Interacts with HrcQa.

The protein localises to the cytoplasm. Its function is as follows. Component of the type III secretion system, which is required for effector protein delivery, parasitism, and pathogenicity. Probably participates in the formation of a C-ring-like assembly along with HrcQa. The chain is Type III secretion protein HrcQb (hrcQb) from Pseudomonas savastanoi pv. phaseolicola (Pseudomonas syringae pv. phaseolicola).